The sequence spans 256 residues: tRNA (guanine-N(7)-)-methyltransferase (256 aa).

Residues Glu85, Glu110, Asp137, and Asp159 each contribute to the S-adenosyl-L-methionine site. Asp159 is a catalytic residue. Positions 163 and 195 each coordinate substrate.

This sequence belongs to the class I-like SAM-binding methyltransferase superfamily. TrmB family.

It carries out the reaction guanosine(46) in tRNA + S-adenosyl-L-methionine = N(7)-methylguanosine(46) in tRNA + S-adenosyl-L-homocysteine. The protein operates within tRNA modification; N(7)-methylguanine-tRNA biosynthesis. Functionally, catalyzes the formation of N(7)-methylguanine at position 46 (m7G46) in tRNA. The protein is tRNA (guanine-N(7)-)-methyltransferase of Rhodopseudomonas palustris (strain BisB5).